We begin with the raw amino-acid sequence, 2635 residues long: Protein unc-79 homolog (2635 aa).

2 positions are modified to phosphoserine: Ser754 and Ser758. 6 disordered regions span residues 907–929, 1538–1575, 1607–1678, 1693–1832, 1863–1909, and 1929–1950; these read GPEG…NCTE, IAQR…DARR, LIDL…SVLS, SKDF…FKIQ, LGEQ…TQYR, and LEHQ…IQPG. Positions 1666 to 1678 are enriched in low complexity; sequence SSPSVPSHPSVLS. Residues 1699–1713 show a composition bias toward polar residues; that stretch reads KDSGNNQSAGNTDSA. Residues 1761 to 1775 show a composition bias toward basic and acidic residues; the sequence is LDDHPDPGTEGEKPG. Composition is skewed to polar residues over residues 1897–1909 and 1929–1947; these read ETSS…TQYR and LEHQ…TEQI. A run of 2 helical transmembrane segments spans residues 2223–2243 and 2466–2486; these read LLSF…ELCG and VLHM…TVYC.

It belongs to the unc-79 family. In terms of assembly, NALCN complex consists of NALCN and auxiliary subunits, UNC79, UNC80 and NACL1. These auxiliary subunits are essential for the NALCN channel function. UNC80 bridges NALCN to UNC79.

It is found in the cell membrane. Its function is as follows. Auxiliary subunit of the NALCN sodium channel complex, a voltage-gated ion channel responsible for the resting Na(+) permeability that controls neuronal excitability. Activated by neuropeptides substance P, neurotensin, and extracellular calcium that regulates neuronal excitability by controlling the sizes of NALCN-dependent sodium-leak current. This chain is Protein unc-79 homolog (UNC79), found in Homo sapiens (Human).